The primary structure comprises 447 residues: MNELLHLAPNVWPRNTTRDEVGVVCIAGIPLTQLAQEYGTPLFVIDEDDFRSRCRETAAAFGSGANVHYAAKAFLCSEVARWISEEGLCLDVCTGGELAVALHASFPPERITLHGNNKSVSELTAAVKAGVGHIVVDSMTEIERLDAIAGEAGIVQDVLVRLTVGVEAHTHEFISTAHEDQKFGLSVASGAAMAAVRRVFATDHLRLVGLHSHIGSQIFDVDGFELAAHRVIGLLRDVVGEFGPEKTAQIATVDLGGGLGISYLPSDDPPPIAELAAKLGTIVSDESTAVGLPTPKLVVEPGRAIAGPGTITLYEVGTVKDVDVSATAHRRYVSVDGGMSDNIRTALYGAQYDVRLVSRVSDAPPVPARLVGKHCESGDIIVRDTWVPDDIRPGDLVAVAATGAYCYSLSSRYNMVGRPAVVAVHAGNARLVLRRETVDDLLSLEVR.

Lys-72 is subject to N6-(pyridoxal phosphate)lysine. Pyridoxal 5'-phosphate is bound by residues Gly-258 and 300-303 (EPGR). Positions 303, 344, and 348 each coordinate substrate. Cys-375 functions as the Proton donor in the catalytic mechanism. Glu-376 and Tyr-405 together coordinate substrate. Tyr-405 contacts pyridoxal 5'-phosphate.

Belongs to the Orn/Lys/Arg decarboxylase class-II family. LysA subfamily. Homodimer. The cofactor is pyridoxal 5'-phosphate.

It carries out the reaction meso-2,6-diaminopimelate + H(+) = L-lysine + CO2. It participates in amino-acid biosynthesis; L-lysine biosynthesis via DAP pathway; L-lysine from DL-2,6-diaminopimelate: step 1/1. Functionally, specifically catalyzes the decarboxylation of meso-diaminopimelate (meso-DAP) to L-lysine. The protein is Diaminopimelate decarboxylase of Mycobacterium bovis (strain ATCC BAA-935 / AF2122/97).